The primary structure comprises 336 residues: Nicotinate-nucleotide--dimethylbenzimidazole phosphoribosyltransferase (336 aa).

Glu-304 functions as the Proton acceptor in the catalytic mechanism.

It belongs to the CobT family.

The enzyme catalyses 5,6-dimethylbenzimidazole + nicotinate beta-D-ribonucleotide = alpha-ribazole 5'-phosphate + nicotinate + H(+). The protein operates within nucleoside biosynthesis; alpha-ribazole biosynthesis; alpha-ribazole from 5,6-dimethylbenzimidazole: step 1/2. In terms of biological role, catalyzes the synthesis of alpha-ribazole-5'-phosphate from nicotinate mononucleotide (NAMN) and 5,6-dimethylbenzimidazole (DMB). The sequence is that of Nicotinate-nucleotide--dimethylbenzimidazole phosphoribosyltransferase from Ruegeria sp. (strain TM1040) (Silicibacter sp.).